Consider the following 325-residue polypeptide: Natural cytotoxicity triggering receptor 1 (325 aa).

The N-terminal stretch at 1 to 16 (MLPTLTALLCLGLCLS) is a signal peptide. At 17-258 (QRINTEKQTL…WDHTAQNLIR (242 aa)) the chain is on the extracellular side. Ig-like domains are found at residues 42–100 (GNSV…TCFY) and 137–192 (GENV…RCFG). An intrachain disulfide couples cysteine 49 to cysteine 98. A glycan (N-linked (GlcNAc...) asparagine) is linked at asparagine 139. A disulfide bond links cysteine 144 and cysteine 190. Residue asparagine 216 is glycosylated (N-linked (GlcNAc...) asparagine). Residues 259–279 (IGLACIIVMALVWLLAEDWLS) form a helical membrane-spanning segment. Residues 280 to 325 (RRKDHEKLNRLTSWECRGRRRMHRYHEEEQRDAISMRELKATPGDM) lie on the Cytoplasmic side of the membrane.

Belongs to the natural cytotoxicity receptor (NCR) family. As to quaternary structure, interacts with CD3Z and FCER1G. As to expression, weakly expressed in spleen, heart and lung.

The protein resides in the cell membrane. Cytotoxicity-activating receptor that may contribute to the increased efficiency of activated natural killer (NK) cells to mediate tumor cell lysis. The polypeptide is Natural cytotoxicity triggering receptor 1 (Ncr1) (Rattus norvegicus (Rat)).